Here is a 79-residue protein sequence, read N- to C-terminus: Endothelin-2 (79 aa).

Residues 1–23 are disordered; the sequence is PEQTAPYGLGNPPRRRRRSLPRR. The interval 24 to 39 is endothelin-like; that stretch reads CQCSSARDPSCATFCL. Positions 51–79 are disordered; the sequence is SRKSPADVFQTGKTGATRGELLQRLRDIS.

This sequence belongs to the endothelin/sarafotoxin family.

It is found in the secreted. Its function is as follows. Endothelins are endothelium-derived vasoconstrictor peptides. The sequence is that of Endothelin-2 (EDN2) from Macaca fascicularis (Crab-eating macaque).